A 276-amino-acid chain; its full sequence is O-methyltransferase cnsE (276 aa).

Residues Gln-110, Asp-133 to Ala-134, and His-155 each bind S-adenosyl-L-methionine.

The protein belongs to the methyltransferase superfamily. S-adenosyl-L-methionine is required as a cofactor.

Its pathway is alkaloid biosynthesis. Its function is as follows. O-methyltransferase; part of the gene cluster that mediates the biosynthesis of communesins, a prominent class of indole alkaloids with great potential as pharmaceuticals. Communesins are biosynthesized by the coupling of tryptamine and aurantioclavine, two building blocks derived from L-tryptophan. The L-tryptophan decarboxylase cnsB converts L-tryptophan to tryptamine, whereas the tryptophan dimethylallyltransferase cnsF converts L-tryptophan to 4-dimethylallyl tryptophan which is further transformed to aurantioclavine by the aurantioclavine synthase cnsA, probably aided by the catalase cnsD. The cytochrome P450 monooxygenase cnsC catalyzes the heterodimeric coupling between the two different indole moieties, tryptamine and aurantioclavine, to construct vicinal quaternary stereocenters and yield the heptacyclic communesin scaffold. The O-methyltransferase cnsE then methylates the communesin scaffold to produce communesin K, the simplest characterized communesin that contains the heptacyclic core. The dioxygenase cnsJ converts communesin K into communesin I. Acylation to introduce the hexadienyl group at position N16 of communesin I by the acyltransferase cnsK leads to the production of communesin B. The hexadienyl group is produced by the highly reducing polyketide synthase cnsI, before being hydrolytically removed from cnsI by the serine hydrolase cnsH, converted into hexadienyl-CoA by the CoA ligase cnsG, and then transferred to communesin I by cnsK. Surprisingly, cnsK may also be a promiscuous acyltransferase that can tolerate a range of acyl groups, including acetyl-, propionyl-, and butyryl-CoA, which lead to communesins A, G and H respectively. The roles of the alpha-ketoglutarate-dependent dioxygenases cnsM and cnsP have still to be determined. The polypeptide is O-methyltransferase cnsE (Penicillium expansum (Blue mold rot fungus)).